Here is a 399-residue protein sequence, read N- to C-terminus: S-adenosylmethionine synthase (399 aa).

Histidine 15 provides a ligand contact to ATP. Aspartate 17 contributes to the Mg(2+) binding site. Residue glutamate 43 coordinates K(+). L-methionine-binding residues include glutamate 56 and glutamine 99. Positions 99–109 (QSADIAQGVDN) are flexible loop. ATP is bound by residues 174 to 176 (DGK), 244 to 245 (RF), aspartate 253, 259 to 260 (RK), alanine 276, and lysine 280. Residue aspartate 253 coordinates L-methionine. L-methionine is bound at residue lysine 284.

The protein belongs to the AdoMet synthase family. Homotetramer; dimer of dimers. Requires Mg(2+) as cofactor. K(+) is required as a cofactor.

Its subcellular location is the cytoplasm. It catalyses the reaction L-methionine + ATP + H2O = S-adenosyl-L-methionine + phosphate + diphosphate. The protein operates within amino-acid biosynthesis; S-adenosyl-L-methionine biosynthesis; S-adenosyl-L-methionine from L-methionine: step 1/1. Functionally, catalyzes the formation of S-adenosylmethionine (AdoMet) from methionine and ATP. The overall synthetic reaction is composed of two sequential steps, AdoMet formation and the subsequent tripolyphosphate hydrolysis which occurs prior to release of AdoMet from the enzyme. In Salinispora arenicola (strain CNS-205), this protein is S-adenosylmethionine synthase.